Consider the following 347-residue polypeptide: S-adenosylmethionine:tRNA ribosyltransferase-isomerase (347 aa).

It belongs to the QueA family. As to quaternary structure, monomer.

It is found in the cytoplasm. It carries out the reaction 7-aminomethyl-7-carbaguanosine(34) in tRNA + S-adenosyl-L-methionine = epoxyqueuosine(34) in tRNA + adenine + L-methionine + 2 H(+). It functions in the pathway tRNA modification; tRNA-queuosine biosynthesis. In terms of biological role, transfers and isomerizes the ribose moiety from AdoMet to the 7-aminomethyl group of 7-deazaguanine (preQ1-tRNA) to give epoxyqueuosine (oQ-tRNA). In Halalkalibacterium halodurans (strain ATCC BAA-125 / DSM 18197 / FERM 7344 / JCM 9153 / C-125) (Bacillus halodurans), this protein is S-adenosylmethionine:tRNA ribosyltransferase-isomerase.